Reading from the N-terminus, the 258-residue chain is Agamous-like MADS-box protein AGL3 (258 aa).

Residues 3–57 (RGKVELKRIENKINRQVTFAKRRNGLLKKAYELSVLCDAEIALLIFSNRGKLYEF) form the MADS-box domain. The K-box domain maps to 88–178 (LQDKYQDYLK…RRKLEDSDAA (91 aa)). A disordered region spans residues 186-214 (SSAAEQQQQHQQQQQGMSSYQSNPPIQEA). Low complexity predominate over residues 191 to 200 (QQQQHQQQQQ). Polar residues predominate over residues 201–210 (GMSSYQSNPP).

As to quaternary structure, forms homodimers. Interacts with TT16/AGL32. Expressed in aerial vegetative organs and flowers, but not in roots. Expressed in flower primordia.

The protein resides in the nucleus. Probable transcription factor that binds specifically to the CArG box DNA sequence 5'-CC (A/T)6 GG-3'. Plays an important role in the determination of flower meristem identity. Involved in the specification of sepal identity. Contributes to the development of petals, stamens and carpels. The chain is Agamous-like MADS-box protein AGL3 (AGL3) from Arabidopsis thaliana (Mouse-ear cress).